We begin with the raw amino-acid sequence, 270 residues long: Phosphatidylglycerol--prolipoprotein diacylglyceryl transferase (270 aa).

4 helical membrane-spanning segments follow: residues 19–39 (FPVY…LWLA), 56–76 (LVLI…VIFE), 92–112 (QGGL…ILFA), and 116–136 (GVSF…GQAI). R138 is a binding site for a 1,2-diacyl-sn-glycero-3-phospho-(1'-sn-glycerol). The next 3 helical transmembrane spans lie at 178–198 (HPTF…LLAL), 206–226 (GELF…VEGL), and 236–256 (LRIA…FIIV).

Belongs to the Lgt family.

It localises to the cell membrane. The enzyme catalyses L-cysteinyl-[prolipoprotein] + a 1,2-diacyl-sn-glycero-3-phospho-(1'-sn-glycerol) = an S-1,2-diacyl-sn-glyceryl-L-cysteinyl-[prolipoprotein] + sn-glycerol 1-phosphate + H(+). The protein operates within protein modification; lipoprotein biosynthesis (diacylglyceryl transfer). Its function is as follows. Catalyzes the transfer of the diacylglyceryl group from phosphatidylglycerol to the sulfhydryl group of the N-terminal cysteine of a prolipoprotein, the first step in the formation of mature lipoproteins. The protein is Phosphatidylglycerol--prolipoprotein diacylglyceryl transferase of Bacillus cereus (strain ZK / E33L).